The following is a 525-amino-acid chain: Cytochrome P450 CYP72A613 (525 aa).

A helical membrane pass occupies residues 2-22 (VFLFPTGTIIIWVLTILLAVI). Cys473 serves as a coordination point for heme.

It belongs to the cytochrome P450 family. Mainly expressed in leaves and seed pods and, to a lower extent, in flowers and stems.

The protein localises to the membrane. It functions in the pathway steroid metabolism; cholesterol metabolism. In terms of biological role, involved in the biosynthesis of spiroketal steroid and saponin natural products from cholesterol such as diosgenin and analogs (e.g. furostanol and spirostanol), plant defense compounds used as main precursors for the industrial production of steroid hormones. During the 5,6-spiroketalization of cholesterol, may catalyze the 27-monohydroxylation of furostanol-type steroid to an intermediate product that undergoes a stereospecific formation of the terminal heterocycle to yield diosgenin. This is Cytochrome P450 CYP72A613 from Trigonella foenum-graecum (Fenugreek).